The following is a 248-amino-acid chain: Large ribosomal subunit protein uL4 (248 aa).

Residues 44–109 (QDTGTDEYAG…LDINTKERKL (66 aa)) are disordered. The span at 92 to 109 (PKAEKDRGLDINTKERKL) shows a compositional bias: basic and acidic residues.

It belongs to the universal ribosomal protein uL4 family. As to quaternary structure, part of the 50S ribosomal subunit.

One of the primary rRNA binding proteins, this protein initially binds near the 5'-end of the 23S rRNA. It is important during the early stages of 50S assembly. It makes multiple contacts with different domains of the 23S rRNA in the assembled 50S subunit and ribosome. Its function is as follows. Forms part of the polypeptide exit tunnel. This chain is Large ribosomal subunit protein uL4, found in Natronomonas pharaonis (strain ATCC 35678 / DSM 2160 / CIP 103997 / JCM 8858 / NBRC 14720 / NCIMB 2260 / Gabara) (Halobacterium pharaonis).